Consider the following 466-residue polypeptide: UDP-N-acetylglucosamine--dolichyl-phosphate N-acetylglucosaminephosphotransferase (466 aa).

The helical transmembrane segment at 12-32 (AAFAVAAHAPVLGLILLGSIV) threads the bilayer. Asp57 serves as a coordination point for UDP-N-acetyl-alpha-D-glucosamine. The N-linked (GlcNAc...) asparagine glycan is linked to Asn59. UDP-N-acetyl-alpha-D-glucosamine is bound at residue Glu90. The next 2 helical transmembrane spans lie at 91–111 (SLGI…TVCL) and 124–144 (PYAS…LGFV). Lys155 serves as a coordination point for dolichyl phosphate. The next 2 helical transmembrane spans lie at 156–176 (IILT…SLSV) and 236–256 (GAAL…LCIF). 255-263 (IFCTNSINI) is a dolichyl phosphate binding site. Mg(2+) is bound at residue Asn262. The next 4 helical transmembrane spans lie at 263 to 283 (ILAG…VASV), 316 to 336 (DHQL…LALW), 345 to 365 (VFVG…SSIT), and 374 to 394 (LFFA…FSIV). Asn268 is a UDP-N-acetyl-alpha-D-glucosamine binding site. Asp349 contacts Mg(2+). Residue 398-400 (RHR) participates in UDP-N-acetyl-alpha-D-glucosamine binding. Asn416 is a glycosylation site (N-linked (GlcNAc...) asparagine). A helical membrane pass occupies residues 442–462 (CQVIACVLGFVVRYVLSAFLY).

The protein belongs to the glycosyltransferase 4 family. The cofactor is Mg(2+).

It localises to the endoplasmic reticulum membrane. The catalysed reaction is a di-trans,poly-cis-dolichyl phosphate + UDP-N-acetyl-alpha-D-glucosamine = an N-acetyl-alpha-D-glucosaminyl-diphospho-di-trans,poly-cis-dolichol + UMP. The protein operates within protein modification; protein glycosylation. Inhibited by natural nucleoside antibiotic tunicamycin, which acts as a structural analog and competitor of UDP-GlcNAc. UDP-N-acetylglucosamine--dolichyl-phosphate N-acetylglucosaminephosphotransferase that operates in the biosynthetic pathway of dolichol-linked oligosaccharides, the glycan precursors employed in protein asparagine (N)-glycosylation. The assembly of dolichol-linked oligosaccharides begins on the cytosolic side of the endoplasmic reticulum membrane and finishes in its lumen. The sequential addition of sugars to dolichol pyrophosphate produces dolichol-linked oligosaccharides containing fourteen sugars, including two GlcNAcs, nine mannoses and three glucoses. Once assembled, the oligosaccharide is transferred from the lipid to nascent proteins by oligosaccharyltransferases. Catalyzes the initial step of dolichol-linked oligosaccharide biosynthesis, transfering GlcNAc-1-P from cytosolic UDP-GlcNAc onto the carrier lipid dolichyl phosphate (P-dolichol), yielding GlcNAc-P-P-dolichol embedded in the cytoplasmic leaflet of the endoplasmic reticulum membrane. The polypeptide is UDP-N-acetylglucosamine--dolichyl-phosphate N-acetylglucosaminephosphotransferase (NAGT) (Leishmania amazonensis).